A 441-amino-acid chain; its full sequence is Xylose isomerase (441 aa).

Catalysis depends on residues His-105 and Asp-108. Mg(2+) contacts are provided by Glu-236, Glu-272, His-275, Asp-300, Asp-311, Asp-313, and Asp-343.

It belongs to the xylose isomerase family. Homotetramer. Mg(2+) is required as a cofactor.

It localises to the cytoplasm. It carries out the reaction alpha-D-xylose = alpha-D-xylulofuranose. The chain is Xylose isomerase from Mesorhizobium japonicum (strain LMG 29417 / CECT 9101 / MAFF 303099) (Mesorhizobium loti (strain MAFF 303099)).